The sequence spans 386 residues: Trichocyst matrix protein T2-B (386 aa).

The signal sequence occupies residues 1–19 (MKTIILALALIALVSSTQS). A propeptide spanning residues 20 to 48 (DVIDTIKKIDQSPFGRTLFDTIWLELQTG) is cleaved from the precursor. Positions 51-154 (LDRLVSTLTD…AEEHEDFEEK (104 aa)) form a coiled coil. Residues 184-238 (KGKAAKQPHKFTKDVANLIQKHFTTSAKKTAKFQHRKGYSKLFKAFATIASKVEQ) constitute a propeptide that is removed on maturation. Residues 294-325 (ALANAISDLAALNDIIAQVEASLDTTVQRIEN) adopt a coiled-coil conformation.

Belongs to the TMP family.

The protein localises to the trichocyst. Structural protein that crystallize inside the trichocyst matrix. This is Trichocyst matrix protein T2-B (T2B) from Paramecium tetraurelia.